The primary structure comprises 525 residues: ATP synthase subunit beta, mitochondrial (525 aa).

Residues 1-44 (MLKKQALSGIRRFSLATKQSFVKTSYKLPRKSWLNTAKFNTIRY) constitute a mitochondrion transit peptide. An ATP-binding site is contributed by 203–210 (GGAGVGKT).

It belongs to the ATPase alpha/beta chains family. F-type ATPases have 2 components, CF(1) - the catalytic core - and CF(0) - the membrane proton channel. CF(1) has five subunits: alpha(3), beta(3), gamma(1), delta(1), epsilon(1). CF(0) has three main subunits: a, b and c.

It localises to the mitochondrion. It is found in the mitochondrion inner membrane. It carries out the reaction ATP + H2O + 4 H(+)(in) = ADP + phosphate + 5 H(+)(out). In terms of biological role, mitochondrial membrane ATP synthase (F(1)F(0) ATP synthase or Complex V) produces ATP from ADP in the presence of a proton gradient across the membrane which is generated by electron transport complexes of the respiratory chain. F-type ATPases consist of two structural domains, F(1) - containing the extramembraneous catalytic core, and F(0) - containing the membrane proton channel, linked together by a central stalk and a peripheral stalk. During catalysis, ATP synthesis in the catalytic domain of F(1) is coupled via a rotary mechanism of the central stalk subunits to proton translocation. Subunits alpha and beta form the catalytic core in F(1). Rotation of the central stalk against the surrounding alpha(3)beta(3) subunits leads to hydrolysis of ATP in three separate catalytic sites on the beta subunits. In Schizosaccharomyces pombe (strain 972 / ATCC 24843) (Fission yeast), this protein is ATP synthase subunit beta, mitochondrial (atp2).